Reading from the N-terminus, the 832-residue chain is Sodium/hydrogen exchanger 3 (832 aa).

The signal sequence occupies residues 1–29 (MGRNRSGCVARCVSLTALVLLLCCPVVRS). At 30-66 (SEAETDPDSHTEHGDSHGGSREGNDTGFQIVTFRWEH) the chain is on the extracellular side. The tract at residues 31–51 (EAETDPDSHTEHGDSHGGSRE) is disordered. The span at 36–51 (PDSHTEHGDSHGGSRE) shows a compositional bias: basic and acidic residues. A helical transmembrane segment spans residues 67 to 89 (VQTPYVIALWILVASLGKIVFHL). Residues 90–97 (SEKVTSVV) lie on the Cytoplasmic side of the membrane. A helical transmembrane segment spans residues 98–117 (PESALLIVLGLILGGIVWAA). Residues 118 to 126 (DHSASFTLT) are Extracellular-facing. A helical transmembrane segment spans residues 127 to 144 (PTVFFFYLLPPIVLDAGY). Residues 145-147 (FMP) are Cytoplasmic-facing. The helical transmembrane segment at 148-183 (NRHFFGNLGTILTYAVIGTVWNAATTGLSLYGVFLL) threads the bilayer. A 1,2-diacyl-sn-glycero-3-phospho-(1D-myo-inositol) is bound by residues glycine 153, glycine 156, and threonine 157. The Extracellular segment spans residues 184–196 (GLMGDLKAGLLEF). The helical transmembrane segment at 197–218 (LLFGSLIAAVDPVAVLAVFEEV) threads the bilayer. Residues 219–220 (HV) are Cytoplasmic-facing. Residues 221 to 252 (NEVLFIIVFGESLLNDAVTVVLYNVFNSFVEV) form a helical membrane-spanning segment. The Extracellular portion of the chain corresponds to 253-259 (GAGNVQG). A helical membrane pass occupies residues 260–294 (LDYFKGIVSFFVVSLGGTAVGIIFAFILSLVTRFT). Residues 295-296 (KH) are Cytoplasmic-facing. Residues 297 to 319 (VRVIEPGFVFVISYLSYLTADML) form a helical membrane-spanning segment. Over 320 to 321 (SL) the chain is Extracellular. The chain crosses the membrane as a helical span at residues 322-338 (SAILAITFCGICCQKYV). Residues 339–345 (KANLCEQ) are Cytoplasmic-facing. Residues 346 to 374 (SITTVRYAMKMLASGAETIIFMFLGISAV) traverse the membrane as a helical segment. The Extracellular portion of the chain corresponds to 375-382 (NPTIWTWN). A helical membrane pass occupies residues 383–404 (TAFILLTLVFISVYRVIGVVIQ). Topologically, residues 405–417 (TWILNHYRVVQLE) are cytoplasmic. Residues 418–441 (IIDQVVMSYGGLRGAVAFALVVLL) form a helical membrane-spanning segment. Residues 442 to 448 (DSNYVGE) lie on the Extracellular side of the membrane. Residues 449–482 (RRLFVSTTIIVVYFTVIFQGLTIKPLVKWLKVKR) traverse the membrane as a helical segment. Topologically, residues 483 to 832 (SQHKEPLLNE…PLSFLPESSM (350 aa)) are cytoplasmic. Positions 512, 513, and 515 each coordinate a 1,2-diacyl-sn-glycero-3-phospho-(1D-myo-inositol). Positions 740–760 (TPASNDADETGTGIDNPSFSN) are disordered.

This sequence belongs to the monovalent cation:proton antiporter 1 (CPA1) transporter (TC 2.A.36) family. In terms of assembly, homodimer. As to expression, detected in early distal renal tubules in the kidney bundle zone, in proximal and late distal tubules in the kidney sinus zone, in absorptive epithelial cells of the intestine and in rectal epithelium (at protein level). Isoform 1 is expressed strongly in the gills, at intermediate levels in the kidney, spleen, rectum, spiral intestine and skin, and weakly in the brain, blood and rectal gland. Isoform 2 is expressed strongly in the kidney, rectum and spiral intestine, and weakly in muscles and the rectal gland.

The protein resides in the apical cell membrane. Its subcellular location is the cell membrane. It is found in the recycling endosome membrane. It localises to the early endosome membrane. The catalysed reaction is Na(+)(in) + H(+)(out) = Na(+)(out) + H(+)(in). Seems to switch between active and inactive modes in response to various stimuli. Activated directly or indirectly by membrane phosphatidylinositol (PIs). Regulated by a variety of auxiliary proteins, which facilitate the maturation, cell surface expression and function of the transporter. Inhibited specifically by the drug tenapanor. Plasma membrane Na(+)/H(+) antiporter. Exchanges intracellular H(+) ions for extracellular Na(+) in 1:1 stoichiometry, playing a key role in salt and fluid absorption and pH homeostasis. Major apical Na(+)/H(+) exchanger in kidney and intestine playing an important role in renal and intestine Na(+) absorption and blood pressure regulation. This chain is Sodium/hydrogen exchanger 3, found in Triakis scyllium (Banded houndshark).